Consider the following 356-residue polypeptide: DNA-directed RNA polymerase subunit alpha (356 aa).

The alpha N-terminal domain (alpha-NTD) stretch occupies residues 1–230 (MNLHRISSEP…DLLKPLLKVE (230 aa)). An alpha C-terminal domain (alpha-CTD) region spans residues 267-356 (IDQPLLPADS…IRKSYGHILG (90 aa)).

The protein belongs to the RNA polymerase alpha chain family. In terms of assembly, in plastids the minimal PEP RNA polymerase catalytic core is composed of four subunits: alpha, beta, beta', and beta''. When a (nuclear-encoded) sigma factor is associated with the core the holoenzyme is formed, which can initiate transcription.

The protein resides in the plastid. It is found in the chloroplast. It carries out the reaction RNA(n) + a ribonucleoside 5'-triphosphate = RNA(n+1) + diphosphate. Its function is as follows. DNA-dependent RNA polymerase catalyzes the transcription of DNA into RNA using the four ribonucleoside triphosphates as substrates. This chain is DNA-directed RNA polymerase subunit alpha, found in Zygnema circumcarinatum (Green alga).